Here is a 272-residue protein sequence, read N- to C-terminus: 3-methyl-2-oxobutanoate hydroxymethyltransferase (272 aa).

Mg(2+) is bound by residues D51 and D90. Residues 51 to 52 (DS), D90, and K119 contribute to the 3-methyl-2-oxobutanoate site. Position 121 (E121) interacts with Mg(2+). E188 functions as the Proton acceptor in the catalytic mechanism.

The protein belongs to the PanB family. Homodecamer; pentamer of dimers. Mg(2+) serves as cofactor.

It is found in the cytoplasm. The catalysed reaction is 3-methyl-2-oxobutanoate + (6R)-5,10-methylene-5,6,7,8-tetrahydrofolate + H2O = 2-dehydropantoate + (6S)-5,6,7,8-tetrahydrofolate. Its pathway is cofactor biosynthesis; (R)-pantothenate biosynthesis; (R)-pantoate from 3-methyl-2-oxobutanoate: step 1/2. Its function is as follows. Catalyzes the reversible reaction in which hydroxymethyl group from 5,10-methylenetetrahydrofolate is transferred onto alpha-ketoisovalerate to form ketopantoate. The sequence is that of 3-methyl-2-oxobutanoate hydroxymethyltransferase from Dechloromonas aromatica (strain RCB).